Consider the following 102-residue polypeptide: RNA-binding protein Hfq (102 aa).

The 60-residue stretch at 9–68 (DPFLNALRRERVPVSIYLVNGIKLQGQIESFDQFVILLKNTVSQMVYKHAISTVVPSRPV) folds into the Sm domain. Residues 64 to 102 (PSRPVSHHSNTPSGGTSNYHHGNNPSAPQQPQQESDDAE) are disordered. Residues 70–96 (HHSNTPSGGTSNYHHGNNPSAPQQPQQ) show a composition bias toward polar residues.

The protein belongs to the Hfq family. Homohexamer.

Functionally, RNA chaperone that binds small regulatory RNA (sRNAs) and mRNAs to facilitate mRNA translational regulation in response to envelope stress, environmental stress and changes in metabolite concentrations. Also binds with high specificity to tRNAs. This chain is RNA-binding protein Hfq, found in Serratia proteamaculans (strain 568).